The sequence spans 159 residues: ATP synthase subunit b 2 (159 aa).

A helical membrane pass occupies residues 1–21; sequence MDATFWAFIALVIFVVIVVYM.

This sequence belongs to the ATPase B chain family. In terms of assembly, F-type ATPases have 2 components, F(1) - the catalytic core - and F(0) - the membrane proton channel. F(1) has five subunits: alpha(3), beta(3), gamma(1), delta(1), epsilon(1). F(0) has three main subunits: a(1), b(2) and c(10-14). The alpha and beta chains form an alternating ring which encloses part of the gamma chain. F(1) is attached to F(0) by a central stalk formed by the gamma and epsilon chains, while a peripheral stalk is formed by the delta and b chains.

It localises to the cell inner membrane. Functionally, f(1)F(0) ATP synthase produces ATP from ADP in the presence of a proton or sodium gradient. F-type ATPases consist of two structural domains, F(1) containing the extramembraneous catalytic core and F(0) containing the membrane proton channel, linked together by a central stalk and a peripheral stalk. During catalysis, ATP synthesis in the catalytic domain of F(1) is coupled via a rotary mechanism of the central stalk subunits to proton translocation. Component of the F(0) channel, it forms part of the peripheral stalk, linking F(1) to F(0). The chain is ATP synthase subunit b 2 from Brucella canis (strain ATCC 23365 / NCTC 10854 / RM-666).